The following is a 139-amino-acid chain: Hydrogenase maturation factor HypA (139 aa).

Position 2 (histidine 2) interacts with Ni(2+). The Zn(2+) site is built by cysteine 73, cysteine 76, cysteine 110, and cysteine 113.

The protein belongs to the HypA/HybF family.

Functionally, involved in the maturation of [NiFe] hydrogenases. Required for nickel insertion into the metal center of the hydrogenase. This is Hydrogenase maturation factor HypA from Thermococcus onnurineus (strain NA1).